A 40-amino-acid chain; its full sequence is WWGPGYGGYGPGYGSGLGDAFSDMFGDGYGDFNFGMSGGG.

This sequence to C.vinosum CV1 and CV2. The protein envelope of the sulfur globules is composed of the three different proteins TR0, TR1 and TR2.

In terms of biological role, structural protein of the sulfur globules, which are intracellular globules that serve for sulfur storage in purple sulfur bacteria. The polypeptide is Sulfur globule protein TR0 (Thiocapsa roseopersicina).